Here is a 363-residue protein sequence, read N- to C-terminus: Probable transglycosylase BTH_I0986 (363 aa).

The protein belongs to the glycosyltransferase group 1 family. Glycosyltransferase 4 subfamily.

Its function is as follows. Probably a transglycosylase. Probably involved in synthesis of the outer membrane receptor for a cellular contact-dependent growth inhibition (CDI) system. The sequence is that of Probable transglycosylase BTH_I0986 from Burkholderia thailandensis (strain ATCC 700388 / DSM 13276 / CCUG 48851 / CIP 106301 / E264).